The following is a 537-amino-acid chain: Probable alpha-galactosidase A (537 aa).

Positions 1–23 are cleaved as a signal peptide; it reads MNQGTKSILLAATLAAIPWQVYG. Cys46 and Cys78 are joined by a disulfide. Residues Asn49, Asn87, Asn93, and Asn123 are each glycosylated (N-linked (GlcNAc...) asparagine). Cys126 and Cys156 are joined by a disulfide. Residue Asp154 is the Nucleophile of the active site. The N-linked (GlcNAc...) asparagine glycan is linked to Asn203. The active-site Proton donor is the Asp212. Asn355 and Asn436 each carry an N-linked (GlcNAc...) asparagine glycan. In terms of domain architecture, Ricin B-type lectin spans 413–537; the sequence is CSSVVPTGLV…FGLPSGVQLS (125 aa). 2 cysteine pairs are disulfide-bonded: Cys430/Cys444 and Cys469/Cys482. A glycan (N-linked (GlcNAc...) asparagine) is linked at Asn491.

It belongs to the glycosyl hydrolase 27 family.

It is found in the secreted. The enzyme catalyses Hydrolysis of terminal, non-reducing alpha-D-galactose residues in alpha-D-galactosides, including galactose oligosaccharides, galactomannans and galactolipids.. In terms of biological role, hydrolyzes a variety of simple alpha-D-galactoside as well as more complex molecules such as oligosaccharides and polysaccharides. This chain is Probable alpha-galactosidase A (aglA), found in Aspergillus niger (strain ATCC MYA-4892 / CBS 513.88 / FGSC A1513).